The following is a 350-amino-acid chain: Opsin, longwave 563 nm (350 aa).

Topologically, residues 1–45 are extracellular; it reads HRLAGRHPQDNYEDSTQSSIFTYTNSNSTRGPFEGPNYHIAPRWV. A glycan (N-linked (GlcNAc...) asparagine) is linked at Asn-27. Residues 46–70 form a helical membrane-spanning segment; the sequence is YHLTSVWMLFVVVASVFTNGLVLAA. Topologically, residues 71-82 are cytoplasmic; sequence TMKFKKLRHPLN. The helical transmembrane segment at 83–108 threads the bilayer; the sequence is WILVNLAIADLAETVIASTISVVNQV. Over 109 to 122 the chain is Extracellular; sequence HGYFVLGHPMCVLE. Residues Cys-119 and Cys-196 are joined by a disulfide bond. Residues 123–142 form a helical membrane-spanning segment; that stretch reads GYTVSLCGITGLWSLAIISW. At 143-161 the chain is on the cytoplasmic side; sequence ERWLVVCKPFGNVRFDAKL. A helical transmembrane segment spans residues 162-185; the sequence is AIVGVAFSWIWSAVWTAPPIFGWS. The Extracellular segment spans residues 186–211; the sequence is RYWPHGLKTSCGPDVFSGSSYPGVQS. A helical transmembrane segment spans residues 212–239; that stretch reads YMIVLMITCCFLPLGIIVLCYLQVWLAI. At 240–261 the chain is on the cytoplasmic side; the sequence is RAVAKQQKESESTQKAEKEVTR. The chain crosses the membrane as a helical span at residues 262 to 285; that stretch reads MVVVMIVAYCVCWGPYTFFACFAA. Over 286-293 the chain is Extracellular; it reads ANPGYAFH. The chain crosses the membrane as a helical span at residues 294–318; that stretch reads PLMAALPAYFAKSATIYNPIIYVFM. Lys-305 carries the N6-(retinylidene)lysine modification. The Cytoplasmic segment spans residues 319–350; sequence NRQFRNCILQLFGKKVDDGSELSSASKTEVSS.

Belongs to the G-protein coupled receptor 1 family. Opsin subfamily. In terms of processing, phosphorylated on some or all of the serine and threonine residues present in the C-terminal region. The color pigments are found in the cone photoreceptor cells.

It localises to the membrane. Functionally, visual pigments are the light-absorbing molecules that mediate vision. They consist of an apoprotein, opsin, covalently linked to cis-retinal. In Callithrix jacchus (White-tufted-ear marmoset), this protein is Opsin, longwave 563 nm.